A 141-amino-acid chain; its full sequence is Succinate dehydrogenase [ubiquinone] cytochrome b small subunit 2 (141 aa).

The transit peptide at 1-24 (MSLIRCTTSKALKFRQLLKMAART) directs the protein to the mitochondrion. Over 25 to 44 (SVTTPVSREPFSIEDHSLHF) the chain is Mitochondrial matrix. The helical transmembrane segment at 45–63 (KIERYWAAGMIPLIPTAYF) threads the bilayer. At 64–68 (IHTPA) the chain is on the mitochondrial intermembrane side. The helical transmembrane segment at 69 to 89 (MDAVLTVAIVLHVHWGIAGVV) threads the bilayer. A heme b-binding site is contributed by His80. Residues 90 to 104 (SDYARPFVIGDTLAR) lie on the Mitochondrial matrix side of the membrane. Tyr92 contacts a ubiquinone. A helical membrane pass occupies residues 105-126 (VARASVYIITVILLASLLHFNN). Over 127 to 141 (SDVGLTKAFEMVWSL) the chain is Mitochondrial intermembrane.

It belongs to the CybS family. Component of the mitochondrial electron transport chain complex II composed of four subunits: a flavoprotein (Fp), an iron-sulfur protein (Ip), and a large cytochrome b (CybL) subunit and a small cytochrome b (CybS) subunit. There are 2 developmental stage-specific forms of complex II which have the Ip and CybL subunits in common. Complex II from the free-living larvae (aerobic environment) acts as a succinate dehydrogenase and is composed of the common subunit Ip and CybL and the stage specific subunits FpL and CybSL. Complex II from parasitic larvae and adults (anaerobic environment) acts as a fumarate reductase and is composed of the common subunit Ip and CybL and the stage specific subunits FpA and CybSA. Heme b is required as a cofactor.

The protein localises to the mitochondrion inner membrane. Its pathway is carbohydrate metabolism; tricarboxylic acid cycle; fumarate from succinate (eukaryal route): step 1/1. Membrane-bound small subunit (CybS) of the mitochondrial electron transport chain complex II, which together with the membrane-bound large subunit (CybL), anchor the catalytic subunits to the inner mitochondria membrane. During the free-living egg-larvae stages, which occur in an aerobic environment, complex II acts as a succinate dehydrogenase by transferring electrons from succinate to ubiquinone. The polypeptide is Succinate dehydrogenase [ubiquinone] cytochrome b small subunit 2 (Ascaris suum (Pig roundworm)).